The following is a 266-amino-acid chain: Phosphatidylglycerol--prolipoprotein diacylglyceryl transferase (266 aa).

7 consecutive transmembrane segments (helical) span residues 10-30, 56-76, 92-112, 120-140, 171-191, 199-219, and 233-253; these read VALA…LIGI, LVFW…VLFY, WKGG…VWWF, FFQL…AGRI, PSQL…LWLF, ASVS…VEFV, and WLTM…ALMV. R139 contacts a 1,2-diacyl-sn-glycero-3-phospho-(1'-sn-glycerol).

This sequence belongs to the Lgt family.

It is found in the cell inner membrane. It carries out the reaction L-cysteinyl-[prolipoprotein] + a 1,2-diacyl-sn-glycero-3-phospho-(1'-sn-glycerol) = an S-1,2-diacyl-sn-glyceryl-L-cysteinyl-[prolipoprotein] + sn-glycerol 1-phosphate + H(+). It participates in protein modification; lipoprotein biosynthesis (diacylglyceryl transfer). Functionally, catalyzes the transfer of the diacylglyceryl group from phosphatidylglycerol to the sulfhydryl group of the N-terminal cysteine of a prolipoprotein, the first step in the formation of mature lipoproteins. The chain is Phosphatidylglycerol--prolipoprotein diacylglyceryl transferase from Pseudomonas paraeruginosa (strain DSM 24068 / PA7) (Pseudomonas aeruginosa (strain PA7)).